Consider the following 520-residue polypeptide: MDKFRRNGKEDTFRQRRFLYPLLFQENLYAIAYDHYLSRSSSFESMENSSYNDRFSFLTVKRLISRIRQQNGSIVSFGNYNQNKNKLVGHNRNFYSELVLEGLTVVLEVTFSIQSKHYLEGMNEWNSFRSIHSIFPFMEDKFPHSNFLLDIRIPHSTHPEILVRTFRYWIQDAPSLHSLRSVLHEHRNLILSENLDQLILIASKEKTRLSLSVLWNYYVYECESLLVPLWKRFSYSRSLSYGAFLERTTFYRKIEHIVIFSHKSIKDLKKRIWFLKDPSIHYVKDRERFLIALRGTYLLVKKWRYHLTNFWQCHFHLRSQPYRMSIDELSKNCFSFLGYLFSVQMKTFVVKIKMLDDSFITDPITKEFDPIAPTTLLIGYLAKERFCDISGRPTGRLAWTGLTDDNILHRFDRIWRNILHYYSGSSKKDGLYRMKYILRLPCAKTLACKHKSAIRVVRERFGSELFTKSSPKERELISLSFSKTRSQRERIWHSDILQRNPFVNSWWNKQNLQVETPFDR.

It belongs to the intron maturase 2 family. MatK subfamily.

Its subcellular location is the plastid. The protein resides in the chloroplast. Usually encoded in the trnK tRNA gene intron. Probably assists in splicing its own and other chloroplast group II introns. This chain is Maturase K, found in Cycas taitungensis (Prince sago).